We begin with the raw amino-acid sequence, 272 residues long: Phosphoribosylformylglycinamidine synthase subunit PurQ (272 aa).

The Glutamine amidotransferase type-1 domain occupies 8 to 243 (VLVMSGYGIN…SEPEYQLKKE (236 aa)). The Nucleophile role is filled by cysteine 98. Residues histidine 225, glutamate 227, and glutamate 235 contribute to the active site.

Part of the FGAM synthase complex composed of 1 PurL, 1 PurQ and 2 PurS subunits.

Its subcellular location is the cytoplasm. It carries out the reaction N(2)-formyl-N(1)-(5-phospho-beta-D-ribosyl)glycinamide + L-glutamine + ATP + H2O = 2-formamido-N(1)-(5-O-phospho-beta-D-ribosyl)acetamidine + L-glutamate + ADP + phosphate + H(+). It catalyses the reaction L-glutamine + H2O = L-glutamate + NH4(+). The protein operates within purine metabolism; IMP biosynthesis via de novo pathway; 5-amino-1-(5-phospho-D-ribosyl)imidazole from N(2)-formyl-N(1)-(5-phospho-D-ribosyl)glycinamide: step 1/2. Part of the phosphoribosylformylglycinamidine synthase complex involved in the purines biosynthetic pathway. Catalyzes the ATP-dependent conversion of formylglycinamide ribonucleotide (FGAR) and glutamine to yield formylglycinamidine ribonucleotide (FGAM) and glutamate. The FGAM synthase complex is composed of three subunits. PurQ produces an ammonia molecule by converting glutamine to glutamate. PurL transfers the ammonia molecule to FGAR to form FGAM in an ATP-dependent manner. PurS interacts with PurQ and PurL and is thought to assist in the transfer of the ammonia molecule from PurQ to PurL. In Methanococcus maripaludis (strain C7 / ATCC BAA-1331), this protein is Phosphoribosylformylglycinamidine synthase subunit PurQ.